A 366-amino-acid polypeptide reads, in one-letter code: tRNA/tmRNA (uracil-C(5))-methyltransferase (366 aa).

5 residues coordinate S-adenosyl-L-methionine: glutamine 190, tyrosine 218, asparagine 223, glutamate 239, and aspartate 299. Catalysis depends on cysteine 324, which acts as the Nucleophile. Glutamate 358 (proton acceptor) is an active-site residue.

Belongs to the class I-like SAM-binding methyltransferase superfamily. RNA M5U methyltransferase family. TrmA subfamily.

It catalyses the reaction uridine(54) in tRNA + S-adenosyl-L-methionine = 5-methyluridine(54) in tRNA + S-adenosyl-L-homocysteine + H(+). It carries out the reaction uridine(341) in tmRNA + S-adenosyl-L-methionine = 5-methyluridine(341) in tmRNA + S-adenosyl-L-homocysteine + H(+). Its function is as follows. Dual-specificity methyltransferase that catalyzes the formation of 5-methyluridine at position 54 (m5U54) in all tRNAs, and that of position 341 (m5U341) in tmRNA (transfer-mRNA). This is tRNA/tmRNA (uracil-C(5))-methyltransferase from Klebsiella pneumoniae (strain 342).